Here is a 72-residue protein sequence, read N- to C-terminus: Large ribosomal subunit protein uL29 (72 aa).

It belongs to the universal ribosomal protein uL29 family.

The polypeptide is Large ribosomal subunit protein uL29 (Prochlorococcus marinus (strain MIT 9515)).